The following is a 172-amino-acid chain: Protein-export protein SecB (172 aa).

A disordered region spans residues 152 to 172; sequence AQGAEGGNSGIVMPDGSQARH.

This sequence belongs to the SecB family. Homotetramer, a dimer of dimers. One homotetramer interacts with 1 SecA dimer.

It is found in the cytoplasm. In terms of biological role, one of the proteins required for the normal export of preproteins out of the cell cytoplasm. It is a molecular chaperone that binds to a subset of precursor proteins, maintaining them in a translocation-competent state. It also specifically binds to its receptor SecA. This Cupriavidus necator (strain ATCC 17699 / DSM 428 / KCTC 22496 / NCIMB 10442 / H16 / Stanier 337) (Ralstonia eutropha) protein is Protein-export protein SecB.